The primary structure comprises 123 residues: Large ribosomal subunit protein uL22 (123 aa).

The protein belongs to the universal ribosomal protein uL22 family. In terms of assembly, part of the 50S ribosomal subunit.

This protein binds specifically to 23S rRNA; its binding is stimulated by other ribosomal proteins, e.g. L4, L17, and L20. It is important during the early stages of 50S assembly. It makes multiple contacts with different domains of the 23S rRNA in the assembled 50S subunit and ribosome. Functionally, the globular domain of the protein is located near the polypeptide exit tunnel on the outside of the subunit, while an extended beta-hairpin is found that lines the wall of the exit tunnel in the center of the 70S ribosome. The chain is Large ribosomal subunit protein uL22 from Synechococcus sp. (strain JA-3-3Ab) (Cyanobacteria bacterium Yellowstone A-Prime).